We begin with the raw amino-acid sequence, 774 residues long: Ion-translocating oxidoreductase complex subunit C (774 aa).

4Fe-4S ferredoxin-type domains lie at 368–398 (ELTS…QQLQ) and 408–437 (KCEE…VQYY). The [4Fe-4S] cluster site is built by cysteine 378, cysteine 381, cysteine 384, cysteine 388, cysteine 417, cysteine 420, cysteine 423, and cysteine 427. Positions 459–490 (ARFEEKKARMERDKAERENRFKQAAEDRRKEM) are enriched in basic and acidic residues. Disordered stretches follow at residues 459–496 (ARFE…QGGS) and 533–774 (AKQA…EEKD). Residues 533–545 (AKQAEAAQSGASE) show a composition bias toward low complexity. Residues 550–572 (EMAKLREERKRQARERKAQKGEV) show a composition bias toward basic and acidic residues. Residues 605–618 (TESAAQPAQATPSS) are compositionally biased toward low complexity. Polar residues-rich tracts occupy residues 645–658 (TEST…TPSS), 686–698 (ESAA…TPSS), 725–738 (TESA…TPSS), and 762–774 (QQSS…EEKD).

It belongs to the 4Fe4S bacterial-type ferredoxin family. RnfC subfamily. As to quaternary structure, the complex is composed of six subunits: RnfA, RnfB, RnfC, RnfD, RnfE and RnfG. [4Fe-4S] cluster serves as cofactor.

It is found in the cell inner membrane. In terms of biological role, part of a membrane-bound complex that couples electron transfer with translocation of ions across the membrane. The protein is Ion-translocating oxidoreductase complex subunit C of Vibrio cholerae serotype O1 (strain ATCC 39315 / El Tor Inaba N16961).